We begin with the raw amino-acid sequence, 81 residues long: Sec-independent protein translocase protein TatA (81 aa).

A helical transmembrane segment spans residues 1–21 (MGGISVWQLLIIAVIVVLLFG). Positions 42 to 81 (AMSDEDSAKNEKDADFEPKSLEKQQQKEAAPETKKDKEQA) are disordered.

This sequence belongs to the TatA/E family. As to quaternary structure, the Tat system comprises two distinct complexes: a TatABC complex, containing multiple copies of TatA, TatB and TatC subunits, and a separate TatA complex, containing only TatA subunits. Substrates initially bind to the TatABC complex, which probably triggers association of the separate TatA complex to form the active translocon.

It localises to the cell inner membrane. In terms of biological role, part of the twin-arginine translocation (Tat) system that transports large folded proteins containing a characteristic twin-arginine motif in their signal peptide across membranes. TatA could form the protein-conducting channel of the Tat system. The sequence is that of Sec-independent protein translocase protein TatA from Vibrio parahaemolyticus serotype O3:K6 (strain RIMD 2210633).